We begin with the raw amino-acid sequence, 426 residues long: Enolase (426 aa).

A (2R)-2-phosphoglycerate-binding site is contributed by glutamine 163. The active-site Proton donor is glutamate 205. The Mg(2+) site is built by aspartate 242, glutamate 286, and aspartate 313. (2R)-2-phosphoglycerate contacts are provided by lysine 338, arginine 367, serine 368, and lysine 389. Lysine 338 (proton acceptor) is an active-site residue.

Belongs to the enolase family. Mg(2+) serves as cofactor.

It localises to the cytoplasm. The protein resides in the secreted. It is found in the cell surface. It carries out the reaction (2R)-2-phosphoglycerate = phosphoenolpyruvate + H2O. The protein operates within carbohydrate degradation; glycolysis; pyruvate from D-glyceraldehyde 3-phosphate: step 4/5. Catalyzes the reversible conversion of 2-phosphoglycerate (2-PG) into phosphoenolpyruvate (PEP). It is essential for the degradation of carbohydrates via glycolysis. This chain is Enolase, found in Helicobacter pylori (strain P12).